A 289-amino-acid polypeptide reads, in one-letter code: Glucose and ribitol dehydrogenase homolog 2 (289 aa).

Residues 1 to 32 form a disordered region; the sequence is MASGFPPQKQETQPGIQHVMEPTPEFSSSNYK. 43–67 serves as a coordination point for NAD(+); sequence LVTGGDSGIGKAVCHCYALEGASVA. Ser180 contributes to the substrate binding site. Residue Tyr193 is the Proton acceptor of the active site.

The protein belongs to the short-chain dehydrogenases/reductases (SDR) family.

In terms of biological role, may act as a short alcohol-polyol-sugar dehydrogenase possibly related to carbohydrate metabolism and the acquisition of desiccation tolerance. May also be involved in signal transduction. The protein is Glucose and ribitol dehydrogenase homolog 2 of Arabidopsis thaliana (Mouse-ear cress).